The primary structure comprises 173 residues: Fimbrial protein PrsE (173 aa).

An N-terminal signal peptide occupies residues 1 to 24 (MKKIRGLCLPVMLGAVLMSQHVHA).

The protein localises to the secreted. The protein resides in the fimbrium. Functionally, fimbriae (also called pili), polar filaments radiating from the surface of the bacterium to a length of 0.5-1.5 micrometers and numbering 100-300 per cell, enable bacteria to colonize the epithelium of specific host organs. The chain is Fimbrial protein PrsE (prsE) from Escherichia coli.